Consider the following 808-residue polypeptide: Probable inorganic carbon transporter subunit DabA (808 aa).

C335, D337, H497, and C512 together coordinate Zn(2+).

Belongs to the inorganic carbon transporter (TC 9.A.2) DabA family. Forms a complex with DabB. The cofactor is Zn(2+).

It is found in the cell inner membrane. Its function is as follows. Part of an energy-coupled inorganic carbon pump. The protein is Probable inorganic carbon transporter subunit DabA of Rhodopseudomonas palustris (strain ATCC BAA-98 / CGA009).